The chain runs to 404 residues: MMFVTGIVLFALAILISVALHECGHMWVARRTGMKVRRYFVGFGPTLWSTRRGETEYGVKAVPLGGFCDIAGMTPVEELDPDERDRAMYKQATWKRVAVLFAGPGMNLAICLVLIYAIALVWGLPNLHPPTRAVIGETGCVAQEVSQGKLEQCTGPGPAALAGIRSGDVVVKVGDTPVSSFDEMAAAVRKSHGSVPIVVERDGTAIVTYVDIESTQRWIPNGQGGELQPATVGAIGVGAARVGPVRYGVFSAMPATFAVTGDLTVEVGKALAALPTKVGALVRAIGGGQRDPQTPISVVGASIIGGDTVDHGLWVAFWFFLAQLNLILAAINLLPLLPFDGGHIAVAVFERIRNMVRSARGKVAAAPVNYLKLLPATYVVLVLVVGYMLLTVTADLVNPIRLFQ.

A helical membrane pass occupies residues 1–21 (MMFVTGIVLFALAILISVALH). Histidine 21 lines the Zn(2+) pocket. The active site involves glutamate 22. Histidine 25 contributes to the Zn(2+) binding site. Residues 104–124 (PGMNLAICLVLIYAIALVWGL) traverse the membrane as a helical segment. The 83-residue stretch at 121–203 (VWGLPNLHPP…SVPIVVERDG (83 aa)) folds into the PDZ domain. Aspartate 202 provides a ligand contact to Zn(2+). 2 consecutive transmembrane segments (helical) span residues 313–333 (LWVA…AINL) and 373–393 (LLPA…LTVT).

The protein belongs to the peptidase M50B family. Zn(2+) is required as a cofactor.

It localises to the cell membrane. In terms of biological role, a probable site-2 protease (S2P) that cleaves type-2 transmembrane proteins within their membrane-spanning domains. Degrades anti-sigma factors RskA, RslA and RsmA, releasing sigma factors SigK, SigL and SigM from the cellular membrane, activating signaling pathways. Does not act on RsdA. Regulates the composition of extractable mycolic acids in the cell envelope in response to changes in membrane fluidity. Mediates transcriptional regulation of mycolic acid biosynthetic genes in response to detergent. Probably also cleaves PbpB (PBP3, FtsI); this cleavage is inhibited by Wag31-PbpBI interaction. Its function is as follows. Regulated intramembrane proteolysis (RIP) occurs when an extracytoplasmic signal (possibly oxidative stress) triggers a concerted proteolytic cascade to transmit information and elicit cellular responses. The membrane-spanning regulatory substrate protein (includes anti-sigma factors RskA, RslA, RsmA, and PbpB) is first cut extracytoplasmically (site-1 protease, S1P), then within the membrane itself (site-2 protease, S2P, this entry), while cytoplasmic proteases finish degrading the regulatory protein, liberating the effector protein (ECF sigma factors SigK, SigL and SigM). In Mycobacterium tuberculosis (strain ATCC 35801 / TMC 107 / Erdman), this protein is Zinc metalloprotease Rip1 (rip1).